A 158-amino-acid polypeptide reads, in one-letter code: 2-C-methyl-D-erythritol 2,4-cyclodiphosphate synthase (158 aa).

Positions 8 and 10 each coordinate a divalent metal cation. Residues 8-10 and 34-35 contribute to the 4-CDP-2-C-methyl-D-erythritol 2-phosphate site; these read DVH and HS. H42 is a binding site for a divalent metal cation. 4-CDP-2-C-methyl-D-erythritol 2-phosphate contacts are provided by residues 56–58, 132–135, and R142; these read DIG and TTNE.

Belongs to the IspF family. As to quaternary structure, homotrimer. A divalent metal cation serves as cofactor.

It catalyses the reaction 4-CDP-2-C-methyl-D-erythritol 2-phosphate = 2-C-methyl-D-erythritol 2,4-cyclic diphosphate + CMP. The protein operates within isoprenoid biosynthesis; isopentenyl diphosphate biosynthesis via DXP pathway; isopentenyl diphosphate from 1-deoxy-D-xylulose 5-phosphate: step 4/6. Its function is as follows. Involved in the biosynthesis of isopentenyl diphosphate (IPP) and dimethylallyl diphosphate (DMAPP), two major building blocks of isoprenoid compounds. Catalyzes the conversion of 4-diphosphocytidyl-2-C-methyl-D-erythritol 2-phosphate (CDP-ME2P) to 2-C-methyl-D-erythritol 2,4-cyclodiphosphate (ME-CPP) with a corresponding release of cytidine 5-monophosphate (CMP). This Chlorobium phaeobacteroides (strain DSM 266 / SMG 266 / 2430) protein is 2-C-methyl-D-erythritol 2,4-cyclodiphosphate synthase.